The sequence spans 1048 residues: Dyslexia-associated protein KIAA0319-like protein (1048 aa).

Residues 1-29 lie on the Cytoplasmic side of the membrane; that stretch reads MEKRLGVKPSPASWVLPGYCWQTSVKLPR. Residues 30 to 50 form a helical membrane-spanning segment; that stretch reads SLYLLYSFFCFSVLWLSTDAD. The region spanning 49-127 is the MANSC domain; sequence ADESRCQQGK…PFRTDSSNSM (79 aa). Over 51 to 928 the chain is Extracellular; it reads ESRCQQGKTL…RDGDSNCEWS (878 aa). 2 disordered regions span residues 198–218 and 231–300; these read HGAM…LSPT and SFTS…STSA. Residues 231–241 are compositionally biased toward polar residues; sequence SFTSNHTTQTP. Asn246 carries an N-linked (GlcNAc...) asparagine glycan. 2 stretches are compositionally biased toward low complexity: residues 247 to 261 and 287 to 300; these read VSIH…SPVS and ATPT…STSA. PKD domains follow at residues 309-400, 408-497, 503-593, 599-687, and 693-784; these read VVSA…VKPE, VAVV…VNKA, VANA…VQPE, QADA…VKEE, and VAKI…VKPD. Asn394 carries an N-linked (GlcNAc...) asparagine glycan. Positions 593-623 are disordered; sequence ENNKPPQADAGPDKELTLPVDSTTLDGSKST. A helical transmembrane segment spans residues 929–949; sequence VLYVIIASFVIVVALGILSWT. The Cytoplasmic portion of the chain corresponds to 950–1048; sequence TICCCKRQKG…KSRSAREEIL (99 aa). Phosphothreonine is present on Thr973. Ser977 carries the phosphoserine modification. Residues 980–1007 form a disordered region; sequence LKPTSRAGSKQKGPTLSSSLMHSESELD. A compositionally biased stretch (polar residues) spans 985-994; the sequence is RAGSKQKGPT. A phosphoserine mark is found at Ser1008 and Ser1030. The interval 1024–1048 is disordered; that stretch reads LYGQNGSVPNGQTPLKSRSAREEIL. Residues 1027–1039 show a composition bias toward polar residues; that stretch reads QNGSVPNGQTPLK. Thr1036 is modified (phosphothreonine).

Interacts with RTN4R. N-glycosylated.

The protein localises to the cytoplasmic granule membrane. The protein resides in the golgi apparatus membrane. Its subcellular location is the golgi apparatus. It localises to the trans-Golgi network membrane. It is found in the cell membrane. Possible role in axon guidance through interaction with RTN4R. Functionally, (Microbial infection) Acts as a receptor for adeno-associated virus and is involved in adeno-associated virus infection through endocytosis system. This Mus musculus (Mouse) protein is Dyslexia-associated protein KIAA0319-like protein.